We begin with the raw amino-acid sequence, 340 residues long: NADH-quinone oxidoreductase subunit H (340 aa).

8 helical membrane-spanning segments follow: residues 4 to 24 (TIGILIWIIIKILVIVVPLLI), 78 to 98 (YLFVIAPLFALVPSLVGWAVI), 113 to 133 (VLYLFAMSSLGVYGVLIAGWA), 151 to 171 (VSYEIAMGFALVGVLLAAGSM), 184 to 204 (MLHWWFIPLLPLFLVFWISGI), 244 to 264 (SMILISTVLAILFMGGWLSPF), 273 to 293 (IFFIVPGFVWLLLKISFFLFV), and 316 to 336 (VLIPVTIVWLIVTALMVVAHV).

Belongs to the complex I subunit 1 family. In terms of assembly, NDH-1 is composed of 14 different subunits. Subunits NuoA, H, J, K, L, M, N constitute the membrane sector of the complex.

It localises to the cell inner membrane. It catalyses the reaction a quinone + NADH + 5 H(+)(in) = a quinol + NAD(+) + 4 H(+)(out). Its function is as follows. NDH-1 shuttles electrons from NADH, via FMN and iron-sulfur (Fe-S) centers, to quinones in the respiratory chain. The immediate electron acceptor for the enzyme in this species is believed to be ubiquinone. Couples the redox reaction to proton translocation (for every two electrons transferred, four hydrogen ions are translocated across the cytoplasmic membrane), and thus conserves the redox energy in a proton gradient. This subunit may bind ubiquinone. This chain is NADH-quinone oxidoreductase subunit H, found in Legionella pneumophila subsp. pneumophila (strain Philadelphia 1 / ATCC 33152 / DSM 7513).